A 370-amino-acid chain; its full sequence is Glutamine synthetase (370 aa).

Residue A2 is modified to N-acetylalanine. The residue at position 5 (S5) is a Phosphoserine. Positions 24–103 constitute a GS beta-grasp domain; the sequence is IIAEYVWIDG…VLAACYNNDG (80 aa). Residues 110–370 enclose the GS catalytic domain; that stretch reads HRHEAAKLFA…MTKEFERESS (261 aa). Residues K283, K324, and K363 each participate in a glycyl lysine isopeptide (Lys-Gly) (interchain with G-Cter in ubiquitin) cross-link.

It belongs to the glutamine synthetase family. As to quaternary structure, homooctamer.

It is found in the cytoplasm. The enzyme catalyses L-glutamate + NH4(+) + ATP = L-glutamine + ADP + phosphate + H(+). The sequence is that of Glutamine synthetase (GLN1) from Saccharomyces cerevisiae (strain ATCC 204508 / S288c) (Baker's yeast).